Consider the following 214-residue polypeptide: Ribonuclease HII (214 aa).

The RNase H type-2 domain occupies 26 to 214 (EIVCGVDEAG…PVREAFDLIR (189 aa)). D32, E33, and D124 together coordinate a divalent metal cation.

It belongs to the RNase HII family. It depends on Mn(2+) as a cofactor. The cofactor is Mg(2+).

It is found in the cytoplasm. The enzyme catalyses Endonucleolytic cleavage to 5'-phosphomonoester.. Functionally, endonuclease that specifically degrades the RNA of RNA-DNA hybrids. The chain is Ribonuclease HII from Burkholderia pseudomallei (strain 1710b).